The following is a 161-amino-acid chain: Nuclear transcription factor Y subunit B-3 (161 aa).

Positions 1–23 (MADSDNDSGGHKDGGNASTREQD) are disordered. Alanine 2 carries the post-translational modification N-acetylalanine. Over residues 8-23 (SGGHKDGGNASTREQD) the composition is skewed to basic and acidic residues. The DNA-binding element occupies 26–32 (LPIANVS). A subunit association domain (SAD) region spans residues 53 to 64 (VQECVSEFISFI). A disordered region spans residues 114-146 (EKTTTAGRQGDKEGGGGGGGAGSGSGGAPMYGG). The segment covering 128 to 146 (GGGGGGAGSGSGGAPMYGG) has biased composition (gly residues).

The protein belongs to the NFYB/HAP3 subunit family. Heterotrimeric transcription factor composed of three components, NF-YA, NF-YB and NF-YC. NF-YB and NF-YC must interact and dimerize for NF-YA association and DNA binding. Component of a heat stress-inducible transcriptional complex with NF-YA and NF-YB subunits made, at least, of NFYA2, NFYB3 and DPB3-1 in cooperation with DREB2A. Binds directly with DPB3-1. Ubiquitous. Expressed in seedlings, petioles, hypocotyls, reproductive organ tissues and leaves.

The protein localises to the nucleus. It localises to the cytoplasm. It is found in the cytosol. Its function is as follows. Component of the NF-Y/HAP transcription factor complex. The NF-Y complex stimulates the transcription of various genes by recognizing and binding to a CCAAT motif in promoters. Promotes the expression of heat stress-inducible genes by contributing to the formation of a heat stress-specific transcriptional complex with NF-Y subunits (e.g. DPB3-1, NF-YA2 and NF-YB3) and DREB2A at the promoter of target genes, thus promoting heat tolerance. In Arabidopsis thaliana (Mouse-ear cress), this protein is Nuclear transcription factor Y subunit B-3.